Consider the following 276-residue polypeptide: MGAPLVALNDGNSIPQVGLGVWQTPPEDTERAVAAALAAGYRHVDTAAAYGNEEQTGRAIAQSGLDRSQVYLVTKLWNSEQGYDATLAAFEASVDRLGVDYLDLYLIHWPVPEKNLFVDTFRAFARLREDGRIRSIGVSNFEPEHLRVLIDSTGIVPAVNQIELHPLLPQRELRELHAQLGIATEAWSPLGQGSLLAHPTVTGVAESHGKTAAQALIRWHMQLGNIVIPKSVNPQRIESNFDVFDFELSEQDMASISSLEDASRLGPDPKTFNFTG.

Residue Tyr50 is the Proton donor of the active site. NADPH-binding residues include Leu190, Ile228, Lys230, Ser231, Val232, Arg236, Ser239, and Asn240.

The protein belongs to the aldo/keto reductase family.

The sequence is that of Aldo-keto reductase Mjls_1919 from Mycobacterium sp. (strain JLS).